Reading from the N-terminus, the 90-residue chain is Small ribosomal subunit protein bS16 (90 aa).

It belongs to the bacterial ribosomal protein bS16 family.

The protein is Small ribosomal subunit protein bS16 of Lactobacillus gasseri (strain ATCC 33323 / DSM 20243 / BCRC 14619 / CIP 102991 / JCM 1131 / KCTC 3163 / NCIMB 11718 / NCTC 13722 / AM63).